We begin with the raw amino-acid sequence, 263 residues long: Phosphoinositide-3-kinase-interacting protein 1 (263 aa).

The first 21 residues, 1-21 (MLLAWVQAFLVSNMLLAEAYG), serve as a signal peptide directing secretion. Over 22–168 (SGGCFWDNGH…NSKEKKDLGT (147 aa)) the chain is Extracellular. The Kringle domain occupies 24–101 (GCFWDNGHLY…EKRPCENLSC (78 aa)). Cystine bridges form between cysteine 25–cysteine 101, cysteine 46–cysteine 82, and cysteine 70–cysteine 96. N-linked (GlcNAc...) asparagine glycosylation occurs at asparagine 98. A helical transmembrane segment spans residues 169–189 (LGYVLGITMMVIIVAIGAGII). At 190 to 263 (LGYSYKRGKD…LMGQAGTPGA (74 aa)) the chain is on the cytoplasmic side. The segment covering 242-251 (QTPVDPQEGS) has biased composition (polar residues). The disordered stretch occupies residues 242–263 (QTPVDPQEGSTPLMGQAGTPGA).

It localises to the cell membrane. Negative regulator of hepatic phosphatidylinositol 3-kinase (PI3K) activity. The protein is Phosphoinositide-3-kinase-interacting protein 1 (PIK3IP1) of Pongo abelii (Sumatran orangutan).